The chain runs to 270 residues: Diaminopimelate epimerase (270 aa).

Substrate is bound by residues asparagine 15, glutamine 49, and asparagine 66. Cysteine 75 functions as the Proton donor in the catalytic mechanism. Substrate is bound by residues 76-77 (GN), asparagine 155, asparagine 187, and 204-205 (ER). Cysteine 213 (proton acceptor) is an active-site residue. 214–215 (GS) lines the substrate pocket.

Belongs to the diaminopimelate epimerase family. In terms of assembly, homodimer.

The protein localises to the cytoplasm. The enzyme catalyses (2S,6S)-2,6-diaminopimelate = meso-2,6-diaminopimelate. Its pathway is amino-acid biosynthesis; L-lysine biosynthesis via DAP pathway; DL-2,6-diaminopimelate from LL-2,6-diaminopimelate: step 1/1. Functionally, catalyzes the stereoinversion of LL-2,6-diaminopimelate (L,L-DAP) to meso-diaminopimelate (meso-DAP), a precursor of L-lysine and an essential component of the bacterial peptidoglycan. This is Diaminopimelate epimerase from Rickettsia typhi (strain ATCC VR-144 / Wilmington).